The chain runs to 269 residues: Zinc transporter ZupT (269 aa).

8 helical membrane-spanning segments follow: residues 12–32, 41–61, 75–95, 126–146, 152–172, 187–207, 211–231, and 249–269; these read AFSI…LVMF, LSFG…TEIF, DHAF…IALI, MMAA…TFFA, AVGM…GISI, VWAC…GYLV, FLSP…MVFL, and TVYG…LFHF. Fe(2+) contacts are provided by N136 and E139. The Zn(2+) site is built by E139 and H164. Fe(2+)-binding residues include N165, E168, and E197. E168 is a Zn(2+) binding site.

The protein belongs to the ZIP transporter (TC 2.A.5) family. ZupT subfamily.

The protein resides in the cell inner membrane. The catalysed reaction is Zn(2+)(in) = Zn(2+)(out). Mediates zinc uptake. May also transport other divalent cations. The polypeptide is Zinc transporter ZupT (Neisseria meningitidis serogroup A / serotype 4A (strain DSM 15465 / Z2491)).